Consider the following 244-residue polypeptide: 1-(5-phosphoribosyl)-5-[(5-phosphoribosylamino)methylideneamino] imidazole-4-carboxamide isomerase (244 aa).

The active-site Proton acceptor is the Asp8. Asp129 serves as the catalytic Proton donor.

Belongs to the HisA/HisF family.

Its subcellular location is the cytoplasm. It carries out the reaction 1-(5-phospho-beta-D-ribosyl)-5-[(5-phospho-beta-D-ribosylamino)methylideneamino]imidazole-4-carboxamide = 5-[(5-phospho-1-deoxy-D-ribulos-1-ylimino)methylamino]-1-(5-phospho-beta-D-ribosyl)imidazole-4-carboxamide. The protein operates within amino-acid biosynthesis; L-histidine biosynthesis; L-histidine from 5-phospho-alpha-D-ribose 1-diphosphate: step 4/9. The protein is 1-(5-phosphoribosyl)-5-[(5-phosphoribosylamino)methylideneamino] imidazole-4-carboxamide isomerase of Bradyrhizobium sp. (strain ORS 278).